The chain runs to 335 residues: UPF0353 protein Mflv_3659 (335 aa).

Transmembrane regions (helical) follow at residues 18-38 (WFFL…VVQL) and 67-87 (LPAV…AGPT). Residues 98–294 (VVMLVIDVSQ…EQLKQVFTNL (197 aa)) form the VWFA domain. The chain crosses the membrane as a helical span at residues 309–329 (VGWLRLGAGVLALAALGALLI).

This sequence belongs to the UPF0353 family.

It is found in the cell membrane. In Mycolicibacterium gilvum (strain PYR-GCK) (Mycobacterium gilvum (strain PYR-GCK)), this protein is UPF0353 protein Mflv_3659.